The following is a 942-amino-acid chain: Protein FAM184B (942 aa).

Disordered stretches follow at residues 1-26 and 73-97; these read MASALNSKIHPPGTCASSKADARGGS and QEDLQDTGAETRTRLPQEQSRTSED. Coiled-coil stretches lie at residues 89–150, 196–337, and 387–495; these read QEQS…RVLI, EMHQ…DRLM, and SETQ…SLLE. Residues 486 to 542 form a disordered region; the sequence is STKLQNSLLEDPCSRPKKPARDEGLEKLTDEEESSSDEEERTGESVKGKSDLQPPFE. A compositionally biased stretch (basic and acidic residues) spans 504-513; sequence PARDEGLEKL. Residues 514-526 are compositionally biased toward acidic residues; that stretch reads TDEEESSSDEEER. Coiled-coil stretches lie at residues 575–619 and 686–815; these read NKDS…ESLR and EKGL…ERRF. Residues 880–934 are disordered; that stretch reads APPITKSPSLDPSPSCSQPYKPTQLLDGKTASRTQDGEPAQPKEAPQKQGSPHQE. The segment covering 885 to 900 has biased composition (polar residues); that stretch reads KSPSLDPSPSCSQPYK.

It belongs to the FAM184 family.

This Mus musculus (Mouse) protein is Protein FAM184B (Fam184b).